The chain runs to 98 residues: NADH-ubiquinone oxidoreductase chain 4L (98 aa).

The next 3 helical transmembrane spans lie at 1-21, 29-49, and 61-81; these read MSLT…GLLM, SLLC…MTIL, and IILL…LVMV.

Belongs to the complex I subunit 4L family. As to quaternary structure, core subunit of respiratory chain NADH dehydrogenase (Complex I) which is composed of 45 different subunits.

It is found in the mitochondrion inner membrane. The catalysed reaction is a ubiquinone + NADH + 5 H(+)(in) = a ubiquinol + NAD(+) + 4 H(+)(out). In terms of biological role, core subunit of the mitochondrial membrane respiratory chain NADH dehydrogenase (Complex I) which catalyzes electron transfer from NADH through the respiratory chain, using ubiquinone as an electron acceptor. Part of the enzyme membrane arm which is embedded in the lipid bilayer and involved in proton translocation. This is NADH-ubiquinone oxidoreductase chain 4L (MT-ND4L) from Vampyressa brocki (Brock's yellow-eared bat).